We begin with the raw amino-acid sequence, 368 residues long: Transmembrane protein 26 (368 aa).

The next 3 membrane-spanning stretches (helical) occupy residues 4–24 (LVFLNALATRLLFLLHSLVGV), 36–56 (YWLLALLNLLLFLETALTLKF), and 65–85 (FSPAIFLYLISIVPSLWLLEL). The N-linked (GlcNAc...) asparagine glycan is linked to Asn-110. Transmembrane regions (helical) follow at residues 150–170 (QTFLLMLIIGRWLLPIGGGIT), 177–197 (LLLMFVGTAADILEFTSETLE), 208–228 (VYAILVIWTWSMLQFPLDLAV), 257–277 (IGISVFIQDGPFLVVRLILMT), and 281–301 (VINQMLVFFAAKNFLVVVLQL). The segment at 324–368 (GEHGCRAQTSESGPSQRDWQNESKEGLAIPLRGSPVTSDDSHHTP) is disordered. The span at 330–341 (AQTSESGPSQRD) shows a compositional bias: polar residues.

It localises to the membrane. The polypeptide is Transmembrane protein 26 (TMEM26) (Homo sapiens (Human)).